The following is a 369-amino-acid chain: uncharacterized protein (369 aa).

Helical transmembrane passes span 25-45 (QWVI…TVHW), 47-67 (FGLL…LMPE), 119-139 (LNIV…FGVM), 152-172 (ITGF…FSAL), 206-226 (GALH…LFAI), 235-255 (LQAV…TLHL), 268-288 (LLFT…LPLI), 295-315 (LVGF…TTVF), and 323-343 (WVFY…GTVF).

It to B.subtilis ComEC.

It localises to the cell membrane. This is an uncharacterized protein from Mycoplasma pneumoniae (strain ATCC 29342 / M129 / Subtype 1) (Mycoplasmoides pneumoniae).